Here is a 750-residue protein sequence, read N- to C-terminus: Dual specificity tyrosine-phosphorylation-regulated kinase 1A (750 aa).

2 disordered regions span residues 56–81 and 104–129; these read ALPY…RDPA and YAKK…KVYN. The Bipartite nuclear localization signal signature appears at 109 to 126; the sequence is RRHQQGQGDDSSHKKERK. The Protein kinase domain maps to 151-471; the sequence is YEIDSLIGKG…PYYALQHSFF (321 aa). ATP is bound by residues 157-165, K180, and 230-233; these read IGKGSFGQV and FEML. The Proton acceptor role is filled by D279. 4 disordered regions span residues 400-434, 477-531, 583-666, and 731-750; these read TKDG…AGES, EGTN…RHSG, SQKN…GNQA, and DRED…VASS. Positions 477 to 493 are enriched in polar residues; sequence EGTNTSNSVSTSPAMEQ. Over residues 494–517 the composition is skewed to low complexity; that stretch reads SQSSGTTSSTSSSSGGSSGTSNSG. The histidine-rich domain (HRD) stretch occupies residues 584–612; that stretch reads QKNVPHHHGNGSHHHHHHHHHHHGQHILS. Over residues 587 to 608 the composition is skewed to basic residues; the sequence is VPHHHGNGSHHHHHHHHHHHGQ. A compositionally biased stretch (polar residues) spans 610 to 621; that stretch reads ILSNRTRTRIYN. Positions 622–659 are enriched in low complexity; sequence SPSTSSSTQDSMDIGNSHHSMTSLSSSTTSSSTSSSST. Residues 741–750 show a composition bias toward polar residues; sequence CVQQSPVASS.

Belongs to the protein kinase superfamily. CMGC Ser/Thr protein kinase family. MNB/DYRK subfamily. In terms of processing, autophosphorylated on tyrosine residues.

The protein resides in the nucleus. It localises to the nucleus speckle. It catalyses the reaction L-seryl-[protein] + ATP = O-phospho-L-seryl-[protein] + ADP + H(+). The catalysed reaction is L-threonyl-[protein] + ATP = O-phospho-L-threonyl-[protein] + ADP + H(+). The enzyme catalyses L-tyrosyl-[protein] + ATP = O-phospho-L-tyrosyl-[protein] + ADP + H(+). It carries out the reaction [DNA-directed RNA polymerase] + ATP = phospho-[DNA-directed RNA polymerase] + ADP + H(+). Functionally, dual-specificity kinase which possesses both serine/threonine and tyrosine kinase activities. Exhibits a substrate preference for proline at position P+1 and arginine at position P-3. Plays an important role in double-strand breaks (DSBs) repair following DNA damage. Mechanistically, phosphorylates RNF169 and increases its ability to block accumulation of TP53BP1 at the DSB sites thereby promoting homologous recombination repair (HRR). Also acts as a positive regulator of transcription by acting as a CTD kinase that mediates phosphorylation of the CTD (C-terminal domain) of the large subunit of RNA polymerase II (RNAP II) POLR2A. Modulates alternative splicing by phosphorylating the splice factor SRSF6. Phosphorylates SEPTIN4, SEPTIN5 and SF3B1. The sequence is that of Dual specificity tyrosine-phosphorylation-regulated kinase 1A from Xenopus laevis (African clawed frog).